Reading from the N-terminus, the 335-residue chain is Holliday junction branch migration complex subunit RuvB (335 aa).

Residues 1-181 (MDRIVEIEKY…FGMQFRLEFY (181 aa)) are large ATPase domain (RuvB-L). L20 provides a ligand contact to ATP. ADP contacts are provided by R21, Y28, I29, G62, L63, G64, K65, T66, and T67. ATP is bound by residues 128-130 (EDY) and R171. Y181 and R218 together coordinate ADP. The interval 182 to 252 (KDSELALILQ…RANEALNSLG (71 aa)) is small ATPAse domain (RuvB-S). A head domain (RuvB-H) region spans residues 255 to 335 (ELGFDAMDLR…LNYEKTLFEE (81 aa)). DNA contacts are provided by R309 and R314.

Belongs to the RuvB family. In terms of assembly, homohexamer. Forms an RuvA(8)-RuvB(12)-Holliday junction (HJ) complex. HJ DNA is sandwiched between 2 RuvA tetramers; dsDNA enters through RuvA and exits via RuvB. An RuvB hexamer assembles on each DNA strand where it exits the tetramer. Each RuvB hexamer is contacted by two RuvA subunits (via domain III) on 2 adjacent RuvB subunits; this complex drives branch migration. In the full resolvosome a probable DNA-RuvA(4)-RuvB(12)-RuvC(2) complex forms which resolves the HJ.

It is found in the cytoplasm. It carries out the reaction ATP + H2O = ADP + phosphate + H(+). In terms of biological role, the RuvA-RuvB-RuvC complex processes Holliday junction (HJ) DNA during genetic recombination and DNA repair, while the RuvA-RuvB complex plays an important role in the rescue of blocked DNA replication forks via replication fork reversal (RFR). RuvA specifically binds to HJ cruciform DNA, conferring on it an open structure. The RuvB hexamer acts as an ATP-dependent pump, pulling dsDNA into and through the RuvAB complex. RuvB forms 2 homohexamers on either side of HJ DNA bound by 1 or 2 RuvA tetramers; 4 subunits per hexamer contact DNA at a time. Coordinated motions by a converter formed by DNA-disengaged RuvB subunits stimulates ATP hydrolysis and nucleotide exchange. Immobilization of the converter enables RuvB to convert the ATP-contained energy into a lever motion, pulling 2 nucleotides of DNA out of the RuvA tetramer per ATP hydrolyzed, thus driving DNA branch migration. The RuvB motors rotate together with the DNA substrate, which together with the progressing nucleotide cycle form the mechanistic basis for DNA recombination by continuous HJ branch migration. Branch migration allows RuvC to scan DNA until it finds its consensus sequence, where it cleaves and resolves cruciform DNA. This chain is Holliday junction branch migration complex subunit RuvB, found in Campylobacter jejuni subsp. jejuni serotype O:2 (strain ATCC 700819 / NCTC 11168).